The chain runs to 973 residues: E3 ubiquitin-protein ligase BRE1A (973 aa).

The disordered stretch occupies residues 1 to 37; sequence MSGIGNKRAAGEPGTSMPPEKKTAVEDSGTTVETIKL. Lysine 21 is subject to N6-acetyllysine. Serine 41 carries the phosphoserine modification. Residues 43-90 are a coiled coil; the sequence is TEELDIRTLQSKNRKLAEMLDQRQAIEDELREHIEKLERRQATDDASL. Residues 128–153 form a disordered region; the sequence is VVPEPEPDSDSNQERKDDRERGDGQE. Phosphoserine is present on residues serine 136 and serine 138. Basic and acidic residues predominate over residues 139-151; it reads NQERKDDRERGDG. Coiled coils occupy residues 168 to 378 and 429 to 896; these read EEME…VKET and SLHK…TTKK. Residues lysine 348 and lysine 510 each carry the N6-acetyllysine modification. The disordered stretch occupies residues 507-620; that stretch reads DLNKTRLRSG…GKHDDGRKKE (114 aa). A Phosphoserine modification is found at serine 522. 2 stretches are compositionally biased toward basic and acidic residues: residues 527–544 and 553–620; these read EDPK…EDLA and SQED…RKKE. Serine 560 carries the phosphoserine modification. The RING-type zinc-finger motif lies at 920–959; the sequence is CPCCNMRKKDAVLTKCFHVFCFECVKTRYDTRQRKCPKCN.

It belongs to the BRE1 family. As to quaternary structure, component of the RNF20/40 complex (also known as BRE1 complex) probably composed of 2 copies of RNF20/BRE1A and 2 copies of RNF40/BRE1B. Interacts with UBE2E1/UBCH6. Interacts with p53/TP53 and WAC. Interacts with PAF1; the interaction mediates the association of the PAF1 and RNF20/40 complexes which is a prerequsite for recruitment of UBE2A/B. Interacts with PA2G4. Interacts with FBXL19.

It is found in the nucleus. The catalysed reaction is S-ubiquitinyl-[E2 ubiquitin-conjugating enzyme]-L-cysteine + [acceptor protein]-L-lysine = [E2 ubiquitin-conjugating enzyme]-L-cysteine + N(6)-ubiquitinyl-[acceptor protein]-L-lysine.. Its pathway is protein modification; protein ubiquitination. Its function is as follows. Component of the RNF20/40 E3 ubiquitin-protein ligase complex that mediates monoubiquitination of 'Lys-120' of histone H2B (H2BK120ub1). H2BK120ub1 gives a specific tag for epigenetic transcriptional activation and is also prerequisite for histone H3 'Lys-4' and 'Lys-79' methylation (H3K4me and H3K79me, respectively). It thereby plays a central role in histone code and gene regulation. The RNF20/40 complex forms a H2B ubiquitin ligase complex in cooperation with the E2 enzyme UBE2A or UBE2B; reports about the cooperation with UBE2E1/UBCH are contradictory. Required for transcriptional activation of Hox genes. Recruited to the MDM2 promoter, probably by being recruited by p53/TP53, and thereby acts as a transcriptional coactivator. Mediates the polyubiquitination of PA2G4 leading to its proteasome-mediated degradation. This chain is E3 ubiquitin-protein ligase BRE1A (Rnf20), found in Mus musculus (Mouse).